The primary structure comprises 180 residues: Peptidyl-tRNA hydrolase (180 aa).

A tRNA-binding site is contributed by Tyr13. His18 acts as the Proton acceptor in catalysis. Tyr58, Asn60, and Asn100 together coordinate tRNA.

This sequence belongs to the PTH family. Monomer.

It is found in the cytoplasm. It carries out the reaction an N-acyl-L-alpha-aminoacyl-tRNA + H2O = an N-acyl-L-amino acid + a tRNA + H(+). Hydrolyzes ribosome-free peptidyl-tRNAs (with 1 or more amino acids incorporated), which drop off the ribosome during protein synthesis, or as a result of ribosome stalling. Functionally, catalyzes the release of premature peptidyl moieties from peptidyl-tRNA molecules trapped in stalled 50S ribosomal subunits, and thus maintains levels of free tRNAs and 50S ribosomes. The sequence is that of Peptidyl-tRNA hydrolase from Fervidobacterium nodosum (strain ATCC 35602 / DSM 5306 / Rt17-B1).